Consider the following 274-residue polypeptide: Acyl-[acyl-carrier-protein]--UDP-N-acetylglucosamine O-acyltransferase (274 aa).

This sequence belongs to the transferase hexapeptide repeat family. LpxA subfamily. In terms of assembly, homotrimer.

It localises to the cytoplasm. It carries out the reaction a (3R)-hydroxyacyl-[ACP] + UDP-N-acetyl-alpha-D-glucosamine = a UDP-3-O-[(3R)-3-hydroxyacyl]-N-acetyl-alpha-D-glucosamine + holo-[ACP]. The protein operates within glycolipid biosynthesis; lipid IV(A) biosynthesis; lipid IV(A) from (3R)-3-hydroxytetradecanoyl-[acyl-carrier-protein] and UDP-N-acetyl-alpha-D-glucosamine: step 1/6. In terms of biological role, involved in the biosynthesis of lipid A, a phosphorylated glycolipid that anchors the lipopolysaccharide to the outer membrane of the cell. The protein is Acyl-[acyl-carrier-protein]--UDP-N-acetylglucosamine O-acyltransferase of Bartonella bacilliformis (strain ATCC 35685 / KC583 / Herrer 020/F12,63).